We begin with the raw amino-acid sequence, 449 residues long: MMWKALLIAVLAIAHCQAVLETDANTLVLLDNLAIRETHSIFFKSLQDRGFKLTYKLADDSSLLLSKYGEYLYKNVIIFAPSVEEFGGDVSVERLAQFVDDGGNVLVAGSEKSGDALREFASECGFELDEENAAVIDHLHYDVSDAGEHTTILTSAKNLIQADTIVGKANRQADAAPLLYRGTGLIADKENPLVLKLLTAESTAYSYNPEASVSDYPHAVGRGTLLIAALQARNNARVVFSGSLLFFSDESFTTAVQYAQSGVFHKLAGNRDVAESISKWVFGETGRLRVASVQHHKEGELLPPDQAYTITDPVVYTIGIEELVQGEWRAFKASDIQLEFVRIDPFVRTYLKQTNTGAYQAKFKIPDVYGVYQFKVDYNRVGYTHLYSTTQVSVRPLEHTQYERFIPSAFPYYTSAFSMMIGVFVFSFVFLHFKDEPVGRAAKEDKKSQ.

A signal peptide spans 1–18; the sequence is MMWKALLIAVLAIAHCQA. The Lumenal segment spans residues 19–412; sequence VLETDANTLV…ERFIPSAFPY (394 aa). The chain crosses the membrane as a helical span at residues 413 to 433; the sequence is YTSAFSMMIGVFVFSFVFLHF. The Cytoplasmic portion of the chain corresponds to 434-449; the sequence is KDEPVGRAAKEDKKSQ.

Belongs to the DDOST 48 kDa subunit family. As to quaternary structure, component of the oligosaccharyltransferase (OST) complex.

Its subcellular location is the endoplasmic reticulum membrane. Its pathway is protein modification; protein glycosylation. In terms of biological role, subunit of the oligosaccharyl transferase (OST) complex that catalyzes the initial transfer of a defined glycan (Glc(3)Man(9)GlcNAc(2) in eukaryotes) from the lipid carrier dolichol-pyrophosphate to an asparagine residue within an Asn-X-Ser/Thr consensus motif in nascent polypeptide chains, the first step in protein N-glycosylation. N-glycosylation occurs cotranslationally and the complex associates with the Sec61 complex at the channel-forming translocon complex that mediates protein translocation across the endoplasmic reticulum (ER). All subunits are required for a maximal enzyme activity. Required for the assembly of both SST3A- and SS3B-containing OST complexes. The polypeptide is Dolichyl-diphosphooligosaccharide--protein glycosyltransferase 48 kDa subunit (Ost48) (Drosophila melanogaster (Fruit fly)).